Reading from the N-terminus, the 310-residue chain is Glucan endo-1,3-beta-glucosidase GI (310 aa).

The Proton donor role is filled by Glu96. Glu234 functions as the Nucleophile in the catalytic mechanism.

The protein belongs to the glycosyl hydrolase 17 family. Monomer. As to expression, young leaves and roots.

It catalyses the reaction Hydrolysis of (1-&gt;3)-beta-D-glucosidic linkages in (1-&gt;3)-beta-D-glucans.. In terms of biological role, may provide a degree of protection against microbial invasion of germinated barley grain through its ability to degrade fungal cell wall polysaccharides. Does not hydrolyze (1,3;1,4)-beta-D-glucans, (1,6)-beta-D-glucan, CM-cellulose, insoluble (1,3)-beta-D-glucans or aryl beta-D-glycosides. The sequence is that of Glucan endo-1,3-beta-glucosidase GI from Hordeum vulgare (Barley).